The following is a 1178-amino-acid chain: Ubiquitin carboxyl-terminal hydrolase cyk-3 (1178 aa).

3 EF-hand domains span residues 28–60, 175–210, and 211–246; these read EEYRRIRQAFQRFKNGCINYDEFCYHVLGGAQI, FPDSYAERLFAVFDENRDGQIDFRELVCTLSALCRG, and PLPGRISQLARIWDVDCDKLLSDEELSNMYKDLNVP. Residues Asp188, Asn190, Asp192, Gln194, Glu199, Asp224, Asp226, Asp228, and Glu235 each coordinate Ca(2+). Residues 296–410 enclose the DUSP domain; the sequence is ESRKMELQIV…VDSQFTRKYL (115 aa). Residues 570–1175 enclose the USP domain; sequence VGLVNYGNFC…GAYLLFYERK (606 aa). Cys579 (nucleophile) is an active-site residue. The segment at 681–725 is disordered; sequence SNKSLHPSPEESEGTDSNKLSDSSKKKEADKEEADEEKAERSWTE. Catalysis depends on His1134, which acts as the Proton acceptor.

The protein belongs to the peptidase C19 family. In terms of tissue distribution, expressed in excretory cells, coelomocytes, head neurons, hypodermal cells, germ cells, oocytes, sperm and pharynx (at protein level).

The protein localises to the nucleus. It localises to the cytoplasm. It is found in the cytoskeleton. Its subcellular location is the microtubule organizing center. It catalyses the reaction Thiol-dependent hydrolysis of ester, thioester, amide, peptide and isopeptide bonds formed by the C-terminal Gly of ubiquitin (a 76-residue protein attached to proteins as an intracellular targeting signal).. Its function is as follows. Ubiquitin-protein hydrolase which cleaves ubiquitin from ubiquitinated proteins. Plays a role in embryo osmoregulation. Probably by regulating osmosis, controls actin redistribution in the 1-cell embryos and thus actin-dependent processes such as cytokinesis and P-granules segregation. During the first embryonic mitotic division, involved in the formation of a functional microtubule organizing center provided by the male pronucleus. Acts as a positive regulator of the mTORC1 signaling. The chain is Ubiquitin carboxyl-terminal hydrolase cyk-3 from Caenorhabditis elegans.